The sequence spans 355 residues: Uroporphyrinogen decarboxylase (355 aa).

Substrate-binding positions include R27–R31, D78, Y155, S210, and H328.

Belongs to the uroporphyrinogen decarboxylase family. As to quaternary structure, homodimer.

The protein resides in the cytoplasm. The enzyme catalyses uroporphyrinogen III + 4 H(+) = coproporphyrinogen III + 4 CO2. Its pathway is porphyrin-containing compound metabolism; protoporphyrin-IX biosynthesis; coproporphyrinogen-III from 5-aminolevulinate: step 4/4. Its function is as follows. Catalyzes the decarboxylation of four acetate groups of uroporphyrinogen-III to yield coproporphyrinogen-III. This chain is Uroporphyrinogen decarboxylase, found in Pseudomonas aeruginosa (strain UCBPP-PA14).